The sequence spans 94 residues: DNA-directed RNA polymerase subunit omega (94 aa).

Belongs to the RNA polymerase subunit omega family. The RNAP catalytic core consists of 2 alpha, 1 beta, 1 beta' and 1 omega subunit. When a sigma factor is associated with the core the holoenzyme is formed, which can initiate transcription.

It carries out the reaction RNA(n) + a ribonucleoside 5'-triphosphate = RNA(n+1) + diphosphate. Its function is as follows. Promotes RNA polymerase assembly. Latches the N- and C-terminal regions of the beta' subunit thereby facilitating its interaction with the beta and alpha subunits. This chain is DNA-directed RNA polymerase subunit omega, found in Shewanella pealeana (strain ATCC 700345 / ANG-SQ1).